A 384-amino-acid chain; its full sequence is Zinc metalloproteinase nas-12 (384 aa).

The N-terminal stretch at 1-25 (MLYIPQFSIYFCLGYLLLFCKISNA) is a signal peptide. The Peptidase M12A domain occupies 73–271 (VSIKGSSMNR…EKLNRLGQCG (199 aa)). 5 disulfide bridges follow: Cys116–Cys270, Cys137–Cys156, Cys287–Cys325, Cys296–Cys318, and Cys305–Cys322. His164 is a binding site for Zn(2+). Glu165 is a catalytic residue. His168 and His174 together coordinate Zn(2+). A ShKT 1 domain is found at 287–325 (CQDVATAVSCEGNRRRGMCKNPFYKQMMIKSCQKTCRLC). The N-linked (GlcNAc...) asparagine glycan is linked to Asn340. Cystine bridges form between Cys348–Cys384, Cys355–Cys377, and Cys364–Cys381. Positions 348–384 (CEDKHPRCDIYSHNGFCTLPFYDDVRYQLCAKTCNLC) constitute a ShKT 2 domain.

Zn(2+) serves as cofactor. In terms of tissue distribution, expressed in pharyngeal glands.

The protein localises to the secreted. Functionally, metalloprotease. In Caenorhabditis elegans, this protein is Zinc metalloproteinase nas-12 (nas-12).